A 70-amino-acid polypeptide reads, in one-letter code: Large ribosomal subunit protein uL29 (70 aa).

This sequence belongs to the universal ribosomal protein uL29 family.

In Clostridium botulinum (strain Eklund 17B / Type B), this protein is Large ribosomal subunit protein uL29.